A 399-amino-acid chain; its full sequence is Argininosuccinate synthase (399 aa).

A9 to S17 is a binding site for ATP. Y85 contributes to the L-citrulline binding site. Residue G115 participates in ATP binding. L-aspartate-binding residues include T117, N121, and D122. N121 contacts L-citrulline. 4 residues coordinate L-citrulline: R125, S173, E258, and Y270.

It belongs to the argininosuccinate synthase family. Type 1 subfamily. As to quaternary structure, homotetramer.

The protein localises to the cytoplasm. It carries out the reaction L-citrulline + L-aspartate + ATP = 2-(N(omega)-L-arginino)succinate + AMP + diphosphate + H(+). It functions in the pathway amino-acid biosynthesis; L-arginine biosynthesis; L-arginine from L-ornithine and carbamoyl phosphate: step 2/3. This is Argininosuccinate synthase from Streptococcus gordonii (strain Challis / ATCC 35105 / BCRC 15272 / CH1 / DL1 / V288).